A 247-amino-acid chain; its full sequence is Segregation and condensation protein A (247 aa).

This sequence belongs to the ScpA family. In terms of assembly, component of a cohesin-like complex composed of ScpA, ScpB and the Smc homodimer, in which ScpA and ScpB bind to the head domain of Smc. The presence of the three proteins is required for the association of the complex with DNA.

It localises to the cytoplasm. In terms of biological role, participates in chromosomal partition during cell division. May act via the formation of a condensin-like complex containing Smc and ScpB that pull DNA away from mid-cell into both cell halves. In Bacillus cereus (strain ATCC 10987 / NRS 248), this protein is Segregation and condensation protein A.